A 229-amino-acid chain; its full sequence is Non-structural protein P8 (229 aa).

Helical transmembrane passes span 119-139 (IIHM…VCTL) and 162-182 (SLNP…MVCA).

Belongs to the orbivirus NS3 family. As to quaternary structure, forms homooligomers via coiled-coil motif. Interacts with host OPTN; this interaction inhibits innate immune response.

The protein resides in the host cell membrane. It localises to the host Golgi apparatus. In terms of biological role, plays a role in the inhibition of host innate immune response. Interacts with host OPTN and thus inhibits the recruitment of TBK1 to the host Golgi apparatus. In turn, downstream partner IRF3 cannot be activated and IFN-beta production is impaired. Its function is as follows. Facilitates viral particle release either by increasing plasma membrane permeability through a viroporin-like activity or by viral budding. In Bluetongue virus 1 (isolate Australia) (BTV 1), this protein is Non-structural protein P8 (Segment-10).